A 119-amino-acid polypeptide reads, in one-letter code: Membrane-anchored ubiquitin-fold protein 6 (119 aa).

The region spanning 8–76 is the Ubiquitin-like domain; sequence IELKFRLADG…NNRTLAESRL (69 aa). Residue cysteine 114 is the site of S-palmitoyl cysteine attachment. A Cysteine methyl ester modification is found at cysteine 116. Cysteine 116 carries S-geranylgeranyl cysteine lipidation. Positions 117 to 119 are cleaved as a propeptide — removed in mature form; the sequence is TIL.

In terms of tissue distribution, ubiquitous.

It localises to the cell membrane. Functionally, may serve as docking site to facilitate the association of other proteins to the plasma membrane. In Arabidopsis thaliana (Mouse-ear cress), this protein is Membrane-anchored ubiquitin-fold protein 6 (MUB6).